A 228-amino-acid polypeptide reads, in one-letter code: Ribonuclease 3 (228 aa).

An RNase III domain is found at 8–130 (LKRLERRVDY…IIGAAFLDSD (123 aa)). Residue Glu-43 coordinates Mg(2+). Asp-47 is an active-site residue. Mg(2+) is bound by residues Asp-116 and Glu-119. Glu-119 is a catalytic residue. The 70-residue stretch at 157-226 (DPKTRLQEHL…ANKMLDSLSG (70 aa)) folds into the DRBM domain.

This sequence belongs to the ribonuclease III family. Homodimer. It depends on Mg(2+) as a cofactor.

It localises to the cytoplasm. It catalyses the reaction Endonucleolytic cleavage to 5'-phosphomonoester.. In terms of biological role, digests double-stranded RNA. Involved in the processing of primary rRNA transcript to yield the immediate precursors to the large and small rRNAs (23S and 16S). Processes some mRNAs, and tRNAs when they are encoded in the rRNA operon. Processes pre-crRNA and tracrRNA of type II CRISPR loci if present in the organism. The chain is Ribonuclease 3 from Psychromonas ingrahamii (strain DSM 17664 / CCUG 51855 / 37).